A 142-amino-acid chain; its full sequence is UPF0310 protein PYRAB08750 (142 aa).

Belongs to the UPF0310 family.

This is UPF0310 protein PYRAB08750 from Pyrococcus abyssi (strain GE5 / Orsay).